An 803-amino-acid chain; its full sequence is Palmitoyl thioesterase CPT1C (803 aa).

Over 1–52 (MAEAHQAVGFRPSLTSDGAEVELSAPVLQEIYLSGLRSWKRHLSRFWNDFLT) the chain is Cytoplasmic. The helical transmembrane segment at 53 to 75 (GVFPASPLSWLFLFSAIQLAWFL) threads the bilayer. The Lumenal segment spans residues 76–103 (QLDPSLGLMEKIKELLPDWGGQHHGLRG). The helical transmembrane segment at 104-126 (VLAAALFASCLWGALIFTLHVAL) threads the bilayer. Over 127 to 803 (RLLLSYHGWL…SKASMTSTDF (677 aa)) the chain is Cytoplasmic. The active-site Proton acceptor is the His470. 552 to 564 (GKSFIRRCHLSSD) contributes to the CoA binding site. (R)-carnitine is bound by residues Tyr586, Ser588, and Thr599. Positions 761–803 (LFQAGQHFKRRFRGSGKENSRHRCGFLSRQTGASKASMTSTDF) are required for interaction with GRIA1. Positions 772–803 (FRGSGKENSRHRCGFLSRQTGASKASMTSTDF) are disordered. Positions 788–803 (SRQTGASKASMTSTDF) are enriched in polar residues.

The protein belongs to the carnitine/choline acetyltransferase family. Peripherally associated with AMPAR complex. AMPAR complex consists of an inner core made of 4 pore-forming GluA/GRIA proteins (GRIA1, GRIA2, GRIA3 and GRIA4) and 4 major auxiliary subunits arranged in a twofold symmetry. One of the two pairs of distinct binding sites is occupied either by CNIH2, CNIH3 or CACNG2, CACNG3. The other harbors CACNG2, CACNG3, CACNG4, CACNG8 or GSG1L. This inner core of AMPAR complex is complemented by outer core constituents binding directly to the GluA/GRIA proteins at sites distinct from the interaction sites of the inner core constituents. Outer core constituents include at least PRRT1, PRRT2, CKAMP44/SHISA9, FRRS1L and NRN1. The proteins of the inner and outer core serve as a platform for other, more peripherally associated AMPAR constituents, including CPT1C. Alone or in combination, these auxiliary subunits control the gating and pharmacology of the AMPAR complex and profoundly impact their biogenesis and protein processing. Interacts with SACM1L; the interaction regulates SACM1L phosphatidylinositol-3-phosphatase activity and translocation to endoplasmic reticulum/trans Golgi network in a malonyl-CoA dependent manner. Interacts with ATL1. In terms of tissue distribution, expressed predominantly in brain and testis. Expressed in motor neurons.

It is found in the cell projection. Its subcellular location is the dendrite. The protein localises to the axon. The protein resides in the endoplasmic reticulum membrane. The catalysed reaction is S-hexadecanoyl-L-cysteinyl-[protein] + H2O = L-cysteinyl-[protein] + hexadecanoate + H(+). Palmitoyl thioesterase specifically expressed in the endoplasmic reticulum of neurons. Modulates the trafficking of the glutamate receptor, AMPAR, to plasma membrane through depalmitoylation of GRIA1. Also regulates AMPR trafficking through the regulation of SACM1L phosphatidylinositol-3-phosphatase activity by interaction in a malonyl-CoA dependent manner. Binds malonyl-CoA and couples malonyl-CoA to ceramide levels, necessary for proper spine maturation and contributing to systemic energy homeostasis and appetite control. Binds to palmitoyl-CoA, but does not have carnitine palmitoyltransferase 1 catalytic activity or at very low levels. The sequence is that of Palmitoyl thioesterase CPT1C from Homo sapiens (Human).